Consider the following 280-residue polypeptide: Ribonuclease Z (280 aa).

Histidine 61, histidine 63, aspartate 65, histidine 66, histidine 153, aspartate 176, and histidine 240 together coordinate Zn(2+). Aspartate 65 functions as the Proton acceptor in the catalytic mechanism.

The protein belongs to the RNase Z family. As to quaternary structure, homodimer. It depends on Zn(2+) as a cofactor.

It carries out the reaction Endonucleolytic cleavage of RNA, removing extra 3' nucleotides from tRNA precursor, generating 3' termini of tRNAs. A 3'-hydroxy group is left at the tRNA terminus and a 5'-phosphoryl group is left at the trailer molecule.. Functionally, zinc phosphodiesterase, which displays some tRNA 3'-processing endonuclease activity. Probably involved in tRNA maturation, by removing a 3'-trailer from precursor tRNA. The sequence is that of Ribonuclease Z from Mycolicibacterium paratuberculosis (strain ATCC BAA-968 / K-10) (Mycobacterium paratuberculosis).